We begin with the raw amino-acid sequence, 256 residues long: uncharacterized protein (256 aa).

29–36 (GDDHSGKT) lines the ATP pocket.

This is an uncharacterized protein from Saccharomyces cerevisiae (strain ATCC 204508 / S288c) (Baker's yeast).